A 423-amino-acid polypeptide reads, in one-letter code: MKAELIAVGTEILTGQIVNTNAQFLSEKMAELGIDVYFQTAVGDNEERLLSVIDIASQRSDLVILCGGLGPTDDDLTKQTLAKYLGKALVFDEQAGQKLDAFFAHRKQTARTPNNQRQAQLIEGSVALQNQTGLAVGGLITVDGVTYVVLPGPPSELKPMVKNELVPLLSASHASLYSRVLRFFGIGESQLVTALEDLIKYQTDPTIAPYAKTGEVTLRLSTKADHQALANERLDQLELQLLSIRTIDNQPLRRLLYGYGEDNSLARETFELLKRSGKTITAAESLTAGLFQAQLTDFAGASQVFNGGFITYSIEEKARMLGIPLVELQRHGVVSSFTAEQMAAQARCLTDSDIGIGLTGVAGPEELEEQPAGTVFIGLATKNKVESLKVVIGGRSRLDVRYIATLYAFNMVRKALLKSENLL.

The protein belongs to the CinA family.

This chain is Putative competence-damage inducible protein, found in Streptococcus equi subsp. zooepidemicus (strain H70).